We begin with the raw amino-acid sequence, 385 residues long: 8-amino-7-oxononanoate synthase (385 aa).

Arg-21 provides a ligand contact to substrate. 108–109 (GF) lines the pyridoxal 5'-phosphate pocket. His-133 contributes to the substrate binding site. Pyridoxal 5'-phosphate is bound by residues Ser-179, His-207, and Thr-233. Position 236 is an N6-(pyridoxal phosphate)lysine (Lys-236). Residue Thr-352 participates in substrate binding.

Belongs to the class-II pyridoxal-phosphate-dependent aminotransferase family. BioF subfamily. Homodimer. Pyridoxal 5'-phosphate is required as a cofactor.

The enzyme catalyses 6-carboxyhexanoyl-[ACP] + L-alanine + H(+) = (8S)-8-amino-7-oxononanoate + holo-[ACP] + CO2. Its pathway is cofactor biosynthesis; biotin biosynthesis. Functionally, catalyzes the decarboxylative condensation of pimeloyl-[acyl-carrier protein] and L-alanine to produce 8-amino-7-oxononanoate (AON), [acyl-carrier protein], and carbon dioxide. In Salmonella dublin (strain CT_02021853), this protein is 8-amino-7-oxononanoate synthase.